A 483-amino-acid chain; its full sequence is Altronate oxidoreductase (483 aa).

NAD(+) is bound at residue isoleucine 18–alanine 29.

Belongs to the mannitol dehydrogenase family. UxaB subfamily.

The enzyme catalyses D-altronate + NAD(+) = keto-D-tagaturonate + NADH + H(+). Its pathway is carbohydrate metabolism; pentose and glucuronate interconversion. This is Altronate oxidoreductase from Shigella flexneri serotype 5b (strain 8401).